The sequence spans 655 residues: Fructose-1,6-bisphosphatase class 3 (655 aa).

Belongs to the FBPase class 3 family. Mn(2+) is required as a cofactor.

The catalysed reaction is beta-D-fructose 1,6-bisphosphate + H2O = beta-D-fructose 6-phosphate + phosphate. The protein operates within carbohydrate biosynthesis; gluconeogenesis. This Porphyromonas gingivalis (strain ATCC BAA-308 / W83) protein is Fructose-1,6-bisphosphatase class 3.